The sequence spans 156 residues: Ribosome maturation factor RimP (156 aa).

The protein belongs to the RimP family.

The protein localises to the cytoplasm. Required for maturation of 30S ribosomal subunits. The polypeptide is Ribosome maturation factor RimP (Bacillus mycoides (strain KBAB4) (Bacillus weihenstephanensis)).